Reading from the N-terminus, the 968-residue chain is RNA polymerase-associated protein RapA (968 aa).

One can recognise a Helicase ATP-binding domain in the interval 164–334 (DVGRRHAPRV…FARLRLLDPN (171 aa)). Position 177-184 (177-184 (DEVGLGKT)) interacts with ATP. The DEAH box signature appears at 280-283 (DEAH). The region spanning 490–685 (RVEWLMGYLT…ALKAQLEQGR (196 aa)) is the Helicase C-terminal domain.

This sequence belongs to the SNF2/RAD54 helicase family. RapA subfamily. As to quaternary structure, interacts with the RNAP. Has a higher affinity for the core RNAP than for the holoenzyme. Its ATPase activity is stimulated by binding to RNAP.

Its function is as follows. Transcription regulator that activates transcription by stimulating RNA polymerase (RNAP) recycling in case of stress conditions such as supercoiled DNA or high salt concentrations. Probably acts by releasing the RNAP, when it is trapped or immobilized on tightly supercoiled DNA. Does not activate transcription on linear DNA. Probably not involved in DNA repair. In Salmonella newport (strain SL254), this protein is RNA polymerase-associated protein RapA.